We begin with the raw amino-acid sequence, 257 residues long: Type I iodothyronine deiodinase (257 aa).

Topologically, residues 1–12 (MGLPGLGLLLKR) are extracellular. A helical; Signal-anchor for type III membrane protein membrane pass occupies residues 13–33 (FGVLVRVALKVAVGKVLLTLW). The Cytoplasmic portion of the chain corresponds to 34–257 (PSAIRPHLLA…CRSSAQSPRL (224 aa)). U126 is an active-site residue. Position 126 (U126) is a non-standard amino acid, selenocysteine.

This sequence belongs to the iodothyronine deiodinase family. Predominantly monomer. Can form homodimers but homodimerization is not essential for enzyme activity. As to expression, liver specific.

It localises to the cell membrane. The protein localises to the endoplasmic reticulum membrane. Its subcellular location is the basolateral cell membrane. The catalysed reaction is 3,3',5-triiodo-L-thyronine + iodide + A + H(+) = L-thyroxine + AH2. It carries out the reaction 3,3',5'-triiodo-L-thyronine + iodide + A + H(+) = L-thyroxine + AH2. The enzyme catalyses 3,3'-diiodo-L-thyronine + iodide + A + H(+) = 3,3',5'-triiodo-L-thyronine + AH2. It catalyses the reaction 3,3'-diiodo-L-thyronine + iodide + A + H(+) = 3,3',5-triiodo-L-thyronine + AH2. The catalysed reaction is 3'-iodo-L-thyronine + iodide + A + H(+) = 3',5'-diiodo-L-thyronine + AH2. It carries out the reaction 3-iodo-L-thyronine + iodide + A + H(+) = 3,5-diiodo-L-thyronine + AH2. The enzyme catalyses 3-iodo-L-thyronine + iodide + A + H(+) = 3,3'-diiodo-L-thyronine + AH2. It catalyses the reaction 3,3'-diiodothyronamine + iodide + A + H(+) = 3,3',5'-triiodothyronamine + AH2. The catalysed reaction is 3'-iodothyronamine + iodide + A + H(+) = 3',5'-diiodothyronamine + AH2. It carries out the reaction 3-iodothyronamine + iodide + A + H(+) = 3,3'-diiodothyronamine + AH2. The enzyme catalyses 3,3'-diiodothyronamine + iodide + A + H(+) = 3,3',5-triiodothyronamine + AH2. It catalyses the reaction 3-iodothyronamine + iodide + A + H(+) = 3,5-diiodothyronamine + AH2. The catalysed reaction is 3,3'-diiodo-L-thyronine sulfate + iodide + A + H(+) = 3,3',5'-triiodo-L-thyronine sulfate + AH2. It carries out the reaction 3,3',5'-triiodo-L-thyronine sulfate + iodide + A + H(+) = L-thyroxine sulfate + AH2. The enzyme catalyses 3,3'-diiodo-L-thyronine sulfate + iodide + A + H(+) = 3,3',5-triiodo-L-thyronine sulfate + AH2. Plays a crucial role in the metabolism of thyroid hormones (TH) and has specific roles in TH activation and inactivation by deiodination. Catalyzes the deiodination of L-thyroxine (T4) to 3,5,3'-triiodothyronine (T3) and 3',5'-diiodothyronine (3',5'-T2) to 3'-monoiodothyronine (3'-T1) via outer-ring deiodination (ORD). Catalyzes the deiodination of T4 to 3,3',5'-triiodothyronine (rT3), T3 to 3,3'-diiodothyronine (3,3'-T2), 3,5-diiodothyronine (3,5-T2) to 3-monoiodothyronine (3-T1) and 3,3'-T2 to 3-T1 via inner-ring deiodination (IRD). Catalyzes the deiodination of rT3 to 3,3'-T2 via ORD. Catalyzes the phenolic ring deiodinations of 3,3',5'-triiodothyronamine, 3',5'-diiodothyronamine and 3,3'-diiodothyronamine as well as tyrosyl ring deiodinations of 3,5,3'-triiodothyronamine and 3,5-diiodothyronamine. Catalyzes the deiodination of L-thyroxine sulfate and 3,3',5-triiodo-L-thyronine sulfate via IRD and of 3,3',5'-triiodo-L-thyronine sulfate via ORD. The protein is Type I iodothyronine deiodinase (DIO1) of Suncus murinus (Asian house shrew).